A 180-amino-acid chain; its full sequence is Oligoribonuclease (180 aa).

Positions 7 to 170 constitute an Exonuclease domain; it reads LIWIDLEMTG…DDIRESIAEL (164 aa). The active site involves Y128.

This sequence belongs to the oligoribonuclease family.

It is found in the cytoplasm. In terms of biological role, 3'-to-5' exoribonuclease specific for small oligoribonucleotides. The protein is Oligoribonuclease of Pseudomonas entomophila (strain L48).